Reading from the N-terminus, the 265-residue chain is Undecaprenyl-diphosphatase (265 aa).

The next 7 membrane-spanning stretches (helical) occupy residues 38–58 (RSDFFNIVIQAGAILAICLAL), 75–95 (RDYVLKVGVAFLVTAVVGLIV), 108–128 (PVAWALLIGGVWMLVAEHFAG), 135–155 (VVTWKVAIAVGLAQVVAGVFP), 181–201 (FVFMVGIPTMFAASGYALLEM), 215–235 (VAVAFVAATITGFVVVKWLLG), and 244–264 (VFAVYRMLLGAALLLWLPAAA).

The protein belongs to the UppP family.

It is found in the cell inner membrane. The enzyme catalyses di-trans,octa-cis-undecaprenyl diphosphate + H2O = di-trans,octa-cis-undecaprenyl phosphate + phosphate + H(+). Functionally, catalyzes the dephosphorylation of undecaprenyl diphosphate (UPP). Confers resistance to bacitracin. The sequence is that of Undecaprenyl-diphosphatase from Xanthomonas axonopodis pv. citri (strain 306).